The sequence spans 99 residues: Putative membrane protein insertion efficiency factor (99 aa).

Belongs to the UPF0161 family.

It is found in the cell inner membrane. Its function is as follows. Could be involved in insertion of integral membrane proteins into the membrane. This chain is Putative membrane protein insertion efficiency factor, found in Salinibacter ruber (strain DSM 13855 / M31).